Here is a 60-residue protein sequence, read N- to C-terminus: Large ribosomal subunit protein uL30 (60 aa).

Belongs to the universal ribosomal protein uL30 family. As to quaternary structure, part of the 50S ribosomal subunit.

This chain is Large ribosomal subunit protein uL30, found in Streptococcus gordonii (strain Challis / ATCC 35105 / BCRC 15272 / CH1 / DL1 / V288).